Reading from the N-terminus, the 60-residue chain is Pepsin A (60 aa).

A propeptide spans 1–45 (activation peptide); it reads FIIKVPLVKKKSLRKNLKEHGLLKDFLKKHSPNPASKYFPQEAAV.

Belongs to the peptidase A1 family.

The protein localises to the secreted. The catalysed reaction is Preferential cleavage: hydrophobic, preferably aromatic, residues in P1 and P1' positions. Cleaves 1-Phe-|-Val-2, 4-Gln-|-His-5, 13-Glu-|-Ala-14, 14-Ala-|-Leu-15, 15-Leu-|-Tyr-16, 16-Tyr-|-Leu-17, 23-Gly-|-Phe-24, 24-Phe-|-Phe-25 and 25-Phe-|-Tyr-26 bonds in the B chain of insulin.. Its function is as follows. Shows particularly broad specificity; although bonds involving phenylalanine and leucine are preferred, many others are also cleaved to some extent. This chain is Pepsin A (PGA), found in Ursus thibetanus (Asiatic black bear).